A 116-amino-acid chain; its full sequence is Large ribosomal subunit protein bL17 (116 aa).

The protein belongs to the bacterial ribosomal protein bL17 family. In terms of assembly, part of the 50S ribosomal subunit. Contacts protein L32.

The polypeptide is Large ribosomal subunit protein bL17 (Synechococcus sp. (strain RCC307)).